The following is a 259-amino-acid chain: Ribosomal RNA small subunit methyltransferase A (259 aa).

N13, L15, G40, E61, D85, and N103 together coordinate S-adenosyl-L-methionine.

It belongs to the class I-like SAM-binding methyltransferase superfamily. rRNA adenine N(6)-methyltransferase family. RsmA subfamily.

It localises to the cytoplasm. The enzyme catalyses adenosine(1518)/adenosine(1519) in 16S rRNA + 4 S-adenosyl-L-methionine = N(6)-dimethyladenosine(1518)/N(6)-dimethyladenosine(1519) in 16S rRNA + 4 S-adenosyl-L-homocysteine + 4 H(+). In terms of biological role, specifically dimethylates two adjacent adenosines (A1518 and A1519) in the loop of a conserved hairpin near the 3'-end of 16S rRNA in the 30S particle. May play a critical role in biogenesis of 30S subunits. This chain is Ribosomal RNA small subunit methyltransferase A, found in Neisseria meningitidis serogroup C / serotype 2a (strain ATCC 700532 / DSM 15464 / FAM18).